The primary structure comprises 106 residues: PAT complex subunit Asterix (106 aa).

Residues 1–29 (MSTNNMSDPRRPNKVLRYKPPPSECNPAL) form a disordered region. An N-acetylserine modification is found at S2. Topologically, residues 2–32 (STNNMSDPRRPNKVLRYKPPPSECNPALDDP) are cytoplasmic. The helical transmembrane segment at 33–51 (TPDYMNLLGMIFSMCGLML) threads the bilayer. Residue K52 is a topological domain, lumenal. A helical transmembrane segment spans residues 53–70 (LKWCAWVAVYCSFISFAN). Residues 71–74 (SRSS) lie on the Cytoplasmic side of the membrane. A helical transmembrane segment spans residues 75-95 (EDTKQMMSSFMLSISAVVMSY). The Lumenal portion of the chain corresponds to 96 to 106 (LQNPQPMTPPW).

It belongs to the Asterix family. Component of the PAT complex, composed of WDR83OS/Asterix and CCDC47. The PAT complex is part of the multi-pass translocon (MPT) complex, composed of three subcomplexes, the GEL complex (composed of RAB5IF/OPTI and TMCO1), the BOS complex (composed of NCLN/Nicalin, NOMO1 and TMEM147) and the PAT complex (composed of WDR83OS/Asterix and CCDC47). The MPT complex associates with the SEC61 complex.

It localises to the endoplasmic reticulum membrane. In terms of biological role, component of the multi-pass translocon (MPT) complex that mediates insertion of multi-pass membrane proteins into the lipid bilayer of membranes. The MPT complex takes over after the SEC61 complex: following membrane insertion of the first few transmembrane segments of proteins by the SEC61 complex, the MPT complex occludes the lateral gate of the SEC61 complex to promote insertion of subsequent transmembrane regions. Within the MPT complex, the PAT subcomplex sequesters any highly polar regions in the transmembrane domains away from the non-polar membrane environment until they can be buried in the interior of the fully assembled protein. Within the PAT subcomplex, WDR83OS/Asterix binds to and redirects the substrate to a location behind the SEC61 complex. The sequence is that of PAT complex subunit Asterix (WDR83OS) from Canis lupus familiaris (Dog).